The sequence spans 240 residues: Triosephosphate isomerase (240 aa).

6-8 (NLK) serves as a coordination point for substrate. Catalysis depends on His-88, which acts as the Electrophile. Glu-157 functions as the Proton acceptor in the catalytic mechanism. Substrate contacts are provided by Gly-163 and Ser-193.

The protein belongs to the triosephosphate isomerase family. As to quaternary structure, homodimer.

It localises to the cytoplasm. It catalyses the reaction D-glyceraldehyde 3-phosphate = dihydroxyacetone phosphate. It functions in the pathway carbohydrate biosynthesis; gluconeogenesis. Its pathway is carbohydrate degradation; glycolysis; D-glyceraldehyde 3-phosphate from glycerone phosphate: step 1/1. Involved in the gluconeogenesis. Catalyzes stereospecifically the conversion of dihydroxyacetone phosphate (DHAP) to D-glyceraldehyde-3-phosphate (G3P). The protein is Triosephosphate isomerase of Sulfurimonas denitrificans (strain ATCC 33889 / DSM 1251) (Thiomicrospira denitrificans (strain ATCC 33889 / DSM 1251)).